A 360-amino-acid chain; its full sequence is Peptide chain release factor 1 (360 aa).

Residue Gln235 is modified to N5-methylglutamine.

This sequence belongs to the prokaryotic/mitochondrial release factor family. In terms of processing, methylated by PrmC. Methylation increases the termination efficiency of RF1.

It localises to the cytoplasm. Its function is as follows. Peptide chain release factor 1 directs the termination of translation in response to the peptide chain termination codons UAG and UAA. The sequence is that of Peptide chain release factor 1 from Burkholderia ambifaria (strain MC40-6).